Consider the following 222-residue polypeptide: Small ribosomal subunit protein eS1 (222 aa).

This sequence belongs to the eukaryotic ribosomal protein eS1 family.

The sequence is that of Small ribosomal subunit protein eS1 from Pyrobaculum neutrophilum (strain DSM 2338 / JCM 9278 / NBRC 100436 / V24Sta) (Thermoproteus neutrophilus).